A 213-amino-acid chain; its full sequence is Adenylate kinase (213 aa).

10 to 15 (GSGKGT) serves as a coordination point for ATP. The interval 30–59 (SVGDLLRNIISSSSELGKKIKGTVESGNLI) is NMP. Residues Arg-36, 57 to 59 (NLI), 83 to 86 (GFPR), and Gln-90 contribute to the AMP site. Positions 125–160 (NRLACLDCKNIYSVSSFKSTTCAKCKSTRLEKRIDD) are LID. An ATP-binding site is contributed by Arg-126. Zn(2+) is bound by residues Cys-129 and Cys-132. ATP is bound at residue 135-136 (IY). Zn(2+) contacts are provided by Cys-146 and Cys-149. Residues Arg-157 and Arg-169 each coordinate AMP. Leu-195 contributes to the ATP binding site.

Belongs to the adenylate kinase family. As to quaternary structure, monomer.

It localises to the cytoplasm. It carries out the reaction AMP + ATP = 2 ADP. It functions in the pathway purine metabolism; AMP biosynthesis via salvage pathway; AMP from ADP: step 1/1. Functionally, catalyzes the reversible transfer of the terminal phosphate group between ATP and AMP. Plays an important role in cellular energy homeostasis and in adenine nucleotide metabolism. This Wolbachia pipientis wMel protein is Adenylate kinase.